The primary structure comprises 225 residues: Ribosomal RNA large subunit methyltransferase E (225 aa).

S-adenosyl-L-methionine is bound by residues G79, W81, D97, D113, and D137. Catalysis depends on K177, which acts as the Proton acceptor.

This sequence belongs to the class I-like SAM-binding methyltransferase superfamily. RNA methyltransferase RlmE family.

It localises to the cytoplasm. The catalysed reaction is uridine(2552) in 23S rRNA + S-adenosyl-L-methionine = 2'-O-methyluridine(2552) in 23S rRNA + S-adenosyl-L-homocysteine + H(+). In terms of biological role, specifically methylates the uridine in position 2552 of 23S rRNA at the 2'-O position of the ribose in the fully assembled 50S ribosomal subunit. This is Ribosomal RNA large subunit methyltransferase E from Acidiphilium cryptum (strain JF-5).